A 419-amino-acid chain; its full sequence is Elongation factor Tu, chloroplastic (419 aa).

The 205-residue stretch at 10 to 214 (KPHVNIGTIG…TVDEHIPTPK (205 aa)) folds into the tr-type G domain. Positions 19–26 (GHVDHGKT) are G1. Residue 19–26 (GHVDHGKT) coordinates GTP. Mg(2+) is bound at residue threonine 26. The tract at residues 60–64 (GITIN) is G2. Residues 81–84 (DCPG) are G3. GTP-binding positions include 81 to 85 (DCPGH) and 136 to 139 (NKAD). The G4 stretch occupies residues 136 to 139 (NKAD). The interval 174-176 (SAL) is G5.

Belongs to the TRAFAC class translation factor GTPase superfamily. Classic translation factor GTPase family. EF-Tu/EF-1A subfamily.

The protein resides in the plastid. Its subcellular location is the chloroplast. The enzyme catalyses GTP + H2O = GDP + phosphate + H(+). Functionally, GTP hydrolase that promotes the GTP-dependent binding of aminoacyl-tRNA to the A-site of ribosomes during protein biosynthesis. This Stigeoclonium helveticum (Green alga) protein is Elongation factor Tu, chloroplastic (tufA).